Consider the following 507-residue polypeptide: 2,3-bisphosphoglycerate-independent phosphoglycerate mutase (507 aa).

2 residues coordinate Mn(2+): aspartate 13 and serine 63. Serine 63 serves as the catalytic Phosphoserine intermediate. Substrate-binding positions include histidine 122, 152–153 (RD), arginine 184, arginine 190, 256–259 (RADR), and lysine 330. Aspartate 397, histidine 401, aspartate 438, histidine 439, and histidine 457 together coordinate Mn(2+).

Belongs to the BPG-independent phosphoglycerate mutase family. As to quaternary structure, monomer. The cofactor is Mn(2+).

The catalysed reaction is (2R)-2-phosphoglycerate = (2R)-3-phosphoglycerate. It participates in carbohydrate degradation; glycolysis; pyruvate from D-glyceraldehyde 3-phosphate: step 3/5. Catalyzes the interconversion of 2-phosphoglycerate and 3-phosphoglycerate. In Chromobacterium violaceum (strain ATCC 12472 / DSM 30191 / JCM 1249 / CCUG 213 / NBRC 12614 / NCIMB 9131 / NCTC 9757 / MK), this protein is 2,3-bisphosphoglycerate-independent phosphoglycerate mutase.